The following is a 78-amino-acid chain: MSRVCQVTGKRPAVGNNRSHAMNATRRRFLPNLHTHRFWVESENRFVTLRLTAKGMRIIDKKGIDAVLAEIRARGEKI.

The protein belongs to the bacterial ribosomal protein bL28 family.

The polypeptide is Large ribosomal subunit protein bL28 (Haemophilus influenzae (strain 86-028NP)).